The primary structure comprises 43 residues: Protein PsbN (43 aa).

Residues Thr-5–Phe-27 form a helical membrane-spanning segment.

It belongs to the PsbN family.

The protein resides in the plastid. The protein localises to the chloroplast thylakoid membrane. In terms of biological role, may play a role in photosystem I and II biogenesis. The chain is Protein PsbN from Cryptomeria japonica (Japanese cedar).